We begin with the raw amino-acid sequence, 377 residues long: Pulmonary surfactant-associated protein B (377 aa).

An N-terminal signal peptide occupies residues 1–22; it reads MAKSHLLQWLLLLPTLCCPGAA. A propeptide spanning residues 23–191 is cleaved from the precursor; the sequence is ITSASSLECA…PHTQDFSEQQ (169 aa). The 41-residue stretch at 24–64 folds into the Saposin A-type domain; it reads TSASSLECAQGPQFWCQSLEHAVQCRALGHCLQEVWGHAGA. 3 Saposin B-type domains span residues 64–146, 195–272, and 291–366; these read ANDL…PRGQ, PLPF…STED, and QDTE…EAPA. Cystine bridges form between C68-C142, C71-C136, C99-C111, C199-C268, C202-C262, C226-C237, C295-C362, C298-C356, and C321-C331. Residues 271-377 constitute a propeptide that is removed on maturation; that stretch reads EDAMGPALPA…PLQCFQTPHL (107 aa). Residue N307 is glycosylated (N-linked (GlcNAc...) asparagine).

Homodimer; disulfide-linked.

Its subcellular location is the secreted. It localises to the extracellular space. The protein resides in the surface film. Functionally, pulmonary surfactant-associated proteins promote alveolar stability by lowering the surface tension at the air-liquid interface in the peripheral air spaces. SP-B increases the collapse pressure of palmitic acid to nearly 70 millinewtons per meter. In Mus musculus (Mouse), this protein is Pulmonary surfactant-associated protein B (Sftpb).